The following is a 1002-amino-acid chain: SIT4-associating protein SAP155 (1002 aa).

Disordered regions lie at residues 51-131, 214-273, 609-645, 868-901, and 940-1002; these read GTSD…APMM, QQQL…ANED, EQLK…ESDY, DNTT…GGGQ, and NTEN…YDHE. S58 carries the phosphoserine modification. Positions 62–97 are enriched in basic and acidic residues; the sequence is EYSHGDEVKTARGDQKSRFEKDDQQERYEKEEEERS. A compositionally biased stretch (low complexity) spans 98 to 114; it reads MNSSESSTTSFSSGSTS. Positions 220–241 are enriched in acidic residues; it reads SSQEDVYVESDTEQEEEKEDDN. S255 carries the post-translational modification Phosphoserine. Over residues 262–273 the composition is skewed to acidic residues; that stretch reads NNNDDDDDANED. A compositionally biased stretch (basic and acidic residues) spans 609–626; it reads EQLKTKHSPTRDTDHDLK. 2 positions are modified to phosphothreonine: T613 and T618. Positions 635–645 are enriched in acidic residues; it reads DNNDNDDESDY. The segment covering 868 to 885 has biased composition (polar residues); sequence DNTTVLTPNGDASNNNEI. Positions 956–976 are enriched in low complexity; it reads SNSNINNTNHNSNNSNNNDNN. The span at 991–1002 shows a compositional bias: acidic residues; that stretch reads EDADNDNDYDHE.

This sequence belongs to the SAPS family. As to quaternary structure, associates with the SIT4 protein phosphatase catalytic subunit in a cell-cycle-dependent manner. Hyperphosphorylated in the absence of SIT4.

Its subcellular location is the cytoplasm. In terms of biological role, positive regulator of protein phosphatase SIT4. Involved in directing expression of TOR-repressed genes and in dephosphorylation of NPR1 in response to nutrient starvation. Negatively modulates K(+) efflux of the cell by the Na(+)-K(+)/H(+) antiporter NHA1. The chain is SIT4-associating protein SAP155 (SAP155) from Saccharomyces cerevisiae (strain ATCC 204508 / S288c) (Baker's yeast).